A 245-amino-acid chain; its full sequence is UPF0246 protein cgR_1824 (245 aa).

It belongs to the UPF0246 family.

This Corynebacterium glutamicum (strain R) protein is UPF0246 protein cgR_1824.